A 122-amino-acid chain; its full sequence is Small ribosomal subunit protein uS13 (122 aa).

The interval 96 to 122 (LPCRGQRTHTNARTRKGPRKPIAGKKK) is disordered.

The protein belongs to the universal ribosomal protein uS13 family. In terms of assembly, part of the 30S ribosomal subunit. Forms a loose heterodimer with protein S19. Forms two bridges to the 50S subunit in the 70S ribosome.

Functionally, located at the top of the head of the 30S subunit, it contacts several helices of the 16S rRNA. In the 70S ribosome it contacts the 23S rRNA (bridge B1a) and protein L5 of the 50S subunit (bridge B1b), connecting the 2 subunits; these bridges are implicated in subunit movement. Contacts the tRNAs in the A and P-sites. The chain is Small ribosomal subunit protein uS13 from Magnetococcus marinus (strain ATCC BAA-1437 / JCM 17883 / MC-1).